The sequence spans 236 residues: Phosphoserine phosphatase (236 aa).

Residue D30 is the Nucleophile of the active site. 2 residues coordinate Mg(2+): D30 and D32. Catalysis depends on D32, which acts as the Proton donor. Substrate is bound by residues E39, R76, 120–121 (SG), and K169. D192 provides a ligand contact to Mg(2+). N195 is a substrate binding site.

The protein belongs to the HAD-like hydrolase superfamily. SerB family. Requires Mg(2+) as cofactor.

It catalyses the reaction O-phospho-L-serine + H2O = L-serine + phosphate. It carries out the reaction O-phospho-D-serine + H2O = D-serine + phosphate. Its pathway is amino-acid biosynthesis; L-serine biosynthesis; L-serine from 3-phospho-D-glycerate: step 3/3. This Polaromonas sp. (strain JS666 / ATCC BAA-500) protein is Phosphoserine phosphatase.